The following is a 485-amino-acid chain: Glutamyl-tRNA(Gln) amidotransferase subunit A (485 aa).

Catalysis depends on charge relay system residues lysine 79 and serine 154. Serine 178 acts as the Acyl-ester intermediate in catalysis.

It belongs to the amidase family. GatA subfamily. In terms of assembly, heterotrimer of A, B and C subunits.

The enzyme catalyses L-glutamyl-tRNA(Gln) + L-glutamine + ATP + H2O = L-glutaminyl-tRNA(Gln) + L-glutamate + ADP + phosphate + H(+). Functionally, allows the formation of correctly charged Gln-tRNA(Gln) through the transamidation of misacylated Glu-tRNA(Gln) in organisms which lack glutaminyl-tRNA synthetase. The reaction takes place in the presence of glutamine and ATP through an activated gamma-phospho-Glu-tRNA(Gln). The chain is Glutamyl-tRNA(Gln) amidotransferase subunit A from Staphylococcus aureus (strain bovine RF122 / ET3-1).